The sequence spans 364 residues: MKKNLMLIFGGVSFEHEISLRSAYGIYSSLLKLDKYNVFSIFVDKVTGIWYLLDSVPSSAELIKRHTTSIVNFIPGCGIFVNNKSLEIDVIFPIIHGRTGEDGAIQGFVKMMDIPCVGAGILGSAISINKYFCKVLLKSFNIPVVSFIGFKKDDYILNKEGIKEDINNKLNYPVIVKPSVLGSSIGINVAYNVSQIEKYIEEAFEYDLTVVVEKFIKAREIECAVIGNDQIKIFTPGEIVVQDFIFYDYDAKYSTVPGDSIVFNIPAHLDMKHLLDIKEYAFLTYKYLELRGMARIDFLISKDTNLLYVNEVNTIPGFTDISMFAKMCEHDGLSYESLVDKLITLAFESYKKRKDKIDFTRLES.

The region spanning 134-344 (KVLLKSFNIP…YESLVDKLIT (211 aa)) is the ATP-grasp domain. 167-222 (NNKLNYPVIVKPSVLGSSIGINVAYNVSQIEKYIEEAFEYDLTVVVEKFIKAREIE) serves as a coordination point for ATP. Asp297, Glu311, and Asn313 together coordinate Mg(2+).

It belongs to the D-alanine--D-alanine ligase family. The cofactor is Mg(2+). Requires Mn(2+) as cofactor.

Its subcellular location is the cytoplasm. It catalyses the reaction 2 D-alanine + ATP = D-alanyl-D-alanine + ADP + phosphate + H(+). It functions in the pathway cell wall biogenesis; peptidoglycan biosynthesis. In terms of biological role, cell wall formation. The protein is D-alanine--D-alanine ligase of Borrelia recurrentis (strain A1).